Reading from the N-terminus, the 569-residue chain is MFFSKMLIPTLKEAPSDADIVSVKLMVRSGMIRKLASGFYELLPLGLKVLRKVENIIRQEMNSAGGQEVIFPLVFPKALWLETDRWNAYGKELFKLKDRKDAEFCLAPTAEEVVTDLIRKDIKSYKQLPVMLYQFGTKFRDEIRPRFGVMRSREFLMKDAYSFHADEADLEKYYKTMFDAYTNICIKCGFQFRAVEAASGVIGGSFSHEFMVLTDTGEEEMTWCSCGYGANSAKTECLKIEQSKEEPLPSEEIFTTDVCAIEDVAKLLNLSPKKFIKTMIYIADKKPVAVLVRGDYEINEIKLQTLLGADGMLLADEQTVISVTNAPIGFAGPAGLKNIKIIADLSVAELSNALTGANKKDYHLKNVNFKRDYNADIVADIRKVKRGDTCPRCKKEELKFSRGIEIGHTFKLGDKYSKSMNASYLDANGKEKFIIMGCYGIGVTRILAAIIEQSHDDDGIIWTNNIAPFEVVIVPLNYADEKTKETTEKIYKELSSKGLDVLIDDRDERAGIKFKDADLIGIPYRITISEKNLANGNVELKARRDGKDDAVRLFKPEGVVIELLKIFKK.

The protein belongs to the class-II aminoacyl-tRNA synthetase family. ProS type 1 subfamily. In terms of assembly, homodimer.

Its subcellular location is the cytoplasm. It catalyses the reaction tRNA(Pro) + L-proline + ATP = L-prolyl-tRNA(Pro) + AMP + diphosphate. Its function is as follows. Catalyzes the attachment of proline to tRNA(Pro) in a two-step reaction: proline is first activated by ATP to form Pro-AMP and then transferred to the acceptor end of tRNA(Pro). As ProRS can inadvertently accommodate and process non-cognate amino acids such as alanine and cysteine, to avoid such errors it has two additional distinct editing activities against alanine. One activity is designated as 'pretransfer' editing and involves the tRNA(Pro)-independent hydrolysis of activated Ala-AMP. The other activity is designated 'posttransfer' editing and involves deacylation of mischarged Ala-tRNA(Pro). The misacylated Cys-tRNA(Pro) is not edited by ProRS. The chain is Proline--tRNA ligase from Endomicrobium trichonymphae.